A 145-amino-acid polypeptide reads, in one-letter code: 3-hydroxyacyl-[acyl-carrier-protein] dehydratase FabZ (145 aa).

Residue H52 is part of the active site.

Belongs to the thioester dehydratase family. FabZ subfamily.

It is found in the cytoplasm. The catalysed reaction is a (3R)-hydroxyacyl-[ACP] = a (2E)-enoyl-[ACP] + H2O. Its function is as follows. Involved in unsaturated fatty acids biosynthesis. Catalyzes the dehydration of short chain beta-hydroxyacyl-ACPs and long chain saturated and unsaturated beta-hydroxyacyl-ACPs. The chain is 3-hydroxyacyl-[acyl-carrier-protein] dehydratase FabZ from Deinococcus radiodurans (strain ATCC 13939 / DSM 20539 / JCM 16871 / CCUG 27074 / LMG 4051 / NBRC 15346 / NCIMB 9279 / VKM B-1422 / R1).